The chain runs to 915 residues: MAPPFTDDPESQRPSTSRLSQDSLSSVSTTSLVFDRIQEEMDRDPSASRSARRDLLPATKDEGDFDENASETGAFLGPPGVPLQRQPMDRGFRRILIIIGAVFVGAWLAGLGIFVLSGSYKHESDSEHDPDANSRGSGKAVTMDQVFGGFWSARSHSISWIADPDGGDGLLLEVNTANGYLVVEDVRADKESTDTNAGQTADTQPAKPRVLMRDPYFMYHGEIKRPDWNEPSPDLKKVLLAVKREKNWRHSFQATYFILDVETAQVQPLVPDNVNAKVQLANWSPTSDAISFTMDNNIYIRRLNQANDVVQITKDGGPEYFYGIPDWVYEEEVFAGRSATWWSDDGKYLAFLRTNETAVPEYAIEYYIQRPSGKKPAVGEEAYPEIRKIKYPKPGAHNPVVDVQYYDVSKGDVFSISAPDEFPDHDRIISNVLWAGNKVLLKQSNRIGDFLKVILVDPSQREAKIVNSINIAEIDGGWFEISHTMTYIPADPSKGRQQDGYVDTVIHEGYEHIGYFTPIDNPKPIMLTSGSWEVEDAPSAVDLNNNLVYFVATKESSIQRHVYSVKLDGTNLTPLTNTSSEGYYTVSFSSRSGFALLSYKGPKIPYQKVISTPSIPIQFSRTIEDNADLADKAKKHELPILKYGTLQLPNGISVNYLERRPPHFNPKKKYPILFQQYSGPKSQTVTKKFAVDFQSYVASSLGYLVVTIDPRGTGFLGRQHRVVVRSQLGVLEAQDHIAAAKHYSSLPYVDPSRLAIWGWSYGGFQTLKTLEVDAGDTFSYGMAVAPVTDWRFYDSIYTERYMRLPQDNTAGYDASAVRNATALGMNKRFLIMHGSADDNVHFQNSLKLLDYLDLAGIENYDVHVFPDSDHSIAFHGANRMVYDRLNNWLVNAFNGEWLKIADPKPIDTKKRRHVS.

A disordered region spans residues 1 to 82; sequence MAPPFTDDPE…GAFLGPPGVP (82 aa). Over 1-94 the chain is Cytoplasmic; the sequence is MAPPFTDDPE…RQPMDRGFRR (94 aa). Positions 15–32 are enriched in low complexity; that stretch reads STSRLSQDSLSSVSTTSL. The span at 36–62 shows a compositional bias: basic and acidic residues; that stretch reads RIQEEMDRDPSASRSARRDLLPATKDE. A helical; Signal-anchor for type II membrane protein membrane pass occupies residues 95–115; sequence ILIIIGAVFVGAWLAGLGIFV. Residues 116–915 are Vacuolar-facing; sequence LSGSYKHESD…IDTKKRRHVS (800 aa). N-linked (GlcNAc...) asparagine glycosylation is found at N355 and N577. The active-site Charge relay system is the S760. An N-linked (GlcNAc...) asparagine glycan is attached at N819. Active-site charge relay system residues include D837 and H870.

It belongs to the peptidase S9B family.

It localises to the vacuole membrane. It carries out the reaction Release of an N-terminal dipeptide, Xaa-Yaa-|-Zaa-, from a polypeptide, preferentially when Yaa is Pro, provided Zaa is neither Pro nor hydroxyproline.. Its function is as follows. Type IV dipeptidyl-peptidase which removes N-terminal dipeptides sequentially from polypeptides having unsubstituted N-termini provided that the penultimate residue is proline. The sequence is that of Probable dipeptidyl-aminopeptidase B (DAPB) from Metarhizium robertsii (strain ARSEF 23 / ATCC MYA-3075) (Metarhizium anisopliae (strain ARSEF 23)).